The chain runs to 136 residues: Congerin-2 (136 aa).

S2 carries the N-acetylserine modification. The Galectin domain maps to 4–136 (RAEVRNIPFK…DARLTFVRLE (133 aa)). Residue 70–76 (WQQEERS) coordinates a beta-D-galactoside.

As to quaternary structure, homodimer.

Functionally, this protein binds beta-galactoside. Its physiological function is not yet known. The sequence is that of Congerin-2 from Conger myriaster (Conger eel).